The sequence spans 2645 residues: Non-reducing polyketide synthase AC (2645 aa).

The segment at 73–2366 (ALQNLNEWLK…TDIVHNAWPM (2294 aa)) is N-terminal acylcarrier protein transacylase domain (SAT). Residue H260 is the Proton donor/acceptor; for transacylase activity of the active site. Positions 416 to 834 (DDKIAVIGMA…GSNSSLVVTE (419 aa)) constitute a Ketosynthase family 3 (KS3) domain. Active-site for beta-ketoacyl synthase activity residues include C583, H718, and H757. The malonyl-CoA:ACP transacylase (MAT) domain stretch occupies residues 943–1252 (CFGGQISTYI…HAVSITTDKS (310 aa)). An N-terminal hotdog fold region spans residues 1324-1457 (SKGFTSFAGY…GVCSFCSATD (134 aa)). One can recognise a PKS/mFAS DH domain in the interval 1324 to 1637 (SKGFTSFAGY…YNKVPLPVMR (314 aa)). Residues 1330–1641 (FAGYIDGNQR…PLPVMRGILG (312 aa)) form a product template (PT) domain region. H1359 (proton acceptor; for dehydratase activity) is an active-site residue. The tract at residues 1487 to 1637 (NIMQGTANIY…YNKVPLPVMR (151 aa)) is C-terminal hotdog fold. D1542 (proton donor; for dehydratase activity) is an active-site residue. Positions 1684-1696 (NGTTGTENPQIKS) are enriched in polar residues. The tract at residues 1684-1716 (NGTTGTENPQIKSKTNKVKKVPTRKSGGSDLET) is disordered. The segment covering 1697–1706 (KTNKVKKVPT) has biased composition (basic residues). The region spanning 1711–1788 (GSDLETPAKT…SLVKYIREIR (78 aa)) is the Carrier domain. S1748 is modified (O-(pantetheine 4'-phosphoryl)serine). A compositionally biased stretch (acidic residues) spans 1794-1805 (QNVDDSESESEE). Residues 1794 to 1816 (QNVDDSESESEELQQQATPIDSA) form a disordered region. Y2009 serves as the catalytic For methyltransferase activity. The interval 2023–2197 (EVFVEKIGSS…SVGYGHVDWT (175 aa)) is methyltransferase (CMeT) domain. Residues 2269–2573 (CVLITGATGS…NIIPFYDWVQ (305 aa)) are NADPH-binding (R) domain.

Its pathway is mycotoxin biosynthesis. Its function is as follows. Non-reducing polyketide synthase; part of the gene cluster that mediates the biosynthesis of the selective antifungal agent ascochitine, an o-quinone methide that plays a possible protective role against other microbial competitors in nature and is considered to be important for pathogenicity of legume-associated Didymella species. The pathway probably begins with the synthesis of a keto-aldehyde intermediate by the ascochitine non-reducing polyketide synthase pksAC from successive condensations of 4 malonyl-CoA units, presumably with a simple acetyl-CoA starter unit. Release of the keto-aldehyde intermediate is consistent with the presence of the C-terminal reductive release domain. The HR-PKS (orf7) probably makes a diketide starter unit which is passed to the non-reducing polyketide synthase pksAC for further extension, producing ascochital and ascochitine. The aldehyde dehydrogenase (orf1), the 2-oxoglutarate-dependent dioxygenase (orf3) and the dehydrogenase (orf9) are probably involved in subsequent oxidations of methyl groups to the carboxylic acid of the heterocyclic ring. The ascochitine gene cluster also includes a gene encoding a short peptide (orf2) that is often found in secondary metabolite gene clusters and which function has still to be determined. This is Non-reducing polyketide synthase AC from Didymella fabae (Leaf and pod spot disease fungus).